The primary structure comprises 191 residues: Probable nicotinate-nucleotide adenylyltransferase (191 aa).

The protein belongs to the NadD family.

It catalyses the reaction nicotinate beta-D-ribonucleotide + ATP + H(+) = deamido-NAD(+) + diphosphate. Its pathway is cofactor biosynthesis; NAD(+) biosynthesis; deamido-NAD(+) from nicotinate D-ribonucleotide: step 1/1. In terms of biological role, catalyzes the reversible adenylation of nicotinate mononucleotide (NaMN) to nicotinic acid adenine dinucleotide (NaAD). The protein is Probable nicotinate-nucleotide adenylyltransferase of Oceanobacillus iheyensis (strain DSM 14371 / CIP 107618 / JCM 11309 / KCTC 3954 / HTE831).